The following is a 302-amino-acid chain: Ethylmalonyl-CoA decarboxylase (302 aa).

The protein belongs to the enoyl-CoA hydratase/isomerase family.

The protein localises to the cytoplasm. The protein resides in the cytosol. The catalysed reaction is (2S)-ethylmalonyl-CoA + H(+) = butanoyl-CoA + CO2. The enzyme catalyses (S)-methylmalonyl-CoA + H(+) = propanoyl-CoA + CO2. It catalyses the reaction (2R)-ethylmalonyl-CoA + H(+) = butanoyl-CoA + CO2. In terms of biological role, decarboxylates ethylmalonyl-CoA, a potentially toxic metabolite, to form butyryl-CoA, suggesting it might be involved in metabolite proofreading. Acts preferentially on (S)-ethylmalonyl-CoA but also has some activity on the (R)-isomer. Also has methylmalonyl-CoA decarboxylase activity at lower level. This is Ethylmalonyl-CoA decarboxylase (echdc1) from Danio rerio (Zebrafish).